The following is a 498-amino-acid chain: Probable malate:quinone oxidoreductase (498 aa).

Belongs to the MQO family. It depends on FAD as a cofactor.

The enzyme catalyses (S)-malate + a quinone = a quinol + oxaloacetate. It functions in the pathway carbohydrate metabolism; tricarboxylic acid cycle; oxaloacetate from (S)-malate (quinone route): step 1/1. This chain is Probable malate:quinone oxidoreductase, found in Granulibacter bethesdensis (strain ATCC BAA-1260 / CGDNIH1).